We begin with the raw amino-acid sequence, 206 residues long: tRNA(Phe) 7-((3-amino-3-carboxypropyl)-4-demethylwyosine(37)-N(4))-methyltransferase 2 (206 aa).

This sequence belongs to the TYW3 family.

The enzyme catalyses 4-demethyl-7-[(3S)-3-amino-3-carboxypropyl]wyosine(37) in tRNA(Phe) + S-adenosyl-L-methionine = 7-[(3S)-3-amino-3-carboxypropyl]wyosine(37) in tRNA(Phe) + S-adenosyl-L-homocysteine + H(+). Functionally, S-adenosyl-L-methionine-dependent methyltransferase that acts as a component of the wyosine derivatives biosynthesis pathway. Probably methylates N-4 position of wybutosine-86 to produce wybutosine-72. This is tRNA(Phe) 7-((3-amino-3-carboxypropyl)-4-demethylwyosine(37)-N(4))-methyltransferase 2 from Pyrococcus furiosus (strain ATCC 43587 / DSM 3638 / JCM 8422 / Vc1).